Here is a 792-residue protein sequence, read N- to C-terminus: RAD50-interacting protein 1 (792 aa).

The segment at 1 to 22 (MLPAGEIGASPAAPCCSESGDE) is disordered. Positions 103-124 (IRSALKNAEESKQFLNQFLEQE) form a coiled coil. Residues 220–792 (WHKILKDKLT…LRTNWPNTGK (573 aa)) enclose the RINT1/TIP20 domain.

This sequence belongs to the RINT1 family. Component of the NRZ complex composed of NBAS, ZW10 and RINT1/TIP20L; NRZ associates with SNAREs STX18, USE1L, BNIP1/SEC20L and SEC22B (the assembly has been described as syntaxin 18 complex). Interacts directly with BNIP1/SEC20L and ZW10. Interacts with UVRAG. Interacts with RAD50 during late S and G2/M phases. Interacts with RBL2, preferentially with the active, hypophosphorylated form.

It localises to the cytoplasm. Its subcellular location is the endoplasmic reticulum membrane. Involved in regulation of membrane traffic between the Golgi and the endoplasmic reticulum (ER); the function is proposed to depend on its association in the NRZ complex which is believed to play a role in SNARE assembly at the ER. May play a role in cell cycle checkpoint control. Essential for telomere length control. This Homo sapiens (Human) protein is RAD50-interacting protein 1 (RINT1).